Here is a 334-residue protein sequence, read N- to C-terminus: Thiamine-binding periplasmic protein (334 aa).

A signal peptide spans 1–23 (MRLLSLLTFSLFAVIGLAPAAQA). Thiamine-binding positions include 64–65 (DG), 166–167 (AT), tryptophan 202, and 220–223 (YTTS).

This sequence belongs to the bacterial solute-binding protein 1 family. In terms of assembly, the complex is composed of two ATP-binding proteins (ThiQ), two transmembrane proteins (ThiP) and a solute-binding protein (ThiB).

The protein localises to the periplasm. Functionally, part of the ABC transporter complex ThiBPQ involved in thiamine import. This is Thiamine-binding periplasmic protein (thiB) from Brucella melitensis biotype 1 (strain ATCC 23456 / CCUG 17765 / NCTC 10094 / 16M).